A 278-amino-acid chain; its full sequence is Indole-3-glycerol phosphate synthase (278 aa).

This sequence belongs to the TrpC family.

It carries out the reaction 1-(2-carboxyphenylamino)-1-deoxy-D-ribulose 5-phosphate + H(+) = (1S,2R)-1-C-(indol-3-yl)glycerol 3-phosphate + CO2 + H2O. Its pathway is amino-acid biosynthesis; L-tryptophan biosynthesis; L-tryptophan from chorismate: step 4/5. The chain is Indole-3-glycerol phosphate synthase from Pseudomonas fluorescens (strain SBW25).